A 525-amino-acid polypeptide reads, in one-letter code: Glutamate--cysteine ligase (525 aa).

The protein belongs to the glutamate--cysteine ligase type 1 family. Type 1 subfamily.

The catalysed reaction is L-cysteine + L-glutamate + ATP = gamma-L-glutamyl-L-cysteine + ADP + phosphate + H(+). It participates in sulfur metabolism; glutathione biosynthesis; glutathione from L-cysteine and L-glutamate: step 1/2. In Pseudoalteromonas translucida (strain TAC 125), this protein is Glutamate--cysteine ligase.